The sequence spans 252 residues: Accessory gland protein Acp32CD (252 aa).

A signal peptide spans 1 to 19 (MWRMRMRLLTGYLVLLALG). The interval 42–252 (PDGEGGTGVD…GAKEDDYEEM (211 aa)) is disordered. Residues 44–69 (GEGGTGVDGGGGGAGGGAAGPGGGTG) show a composition bias toward gly residues. Basic and acidic residues-rich tracts occupy residues 104-122 (AIGK…DSKD), 142-153 (SDSKDAKDRQDK), 159-171 (QEGK…HHSS), and 209-225 (NGAR…KEVA).

As to expression, seminal fluid.

It is found in the secreted. Its function is as follows. Responsible for physiological and behavioral changes in mated female flies. The polypeptide is Accessory gland protein Acp32CD (Acp32CD) (Drosophila melanogaster (Fruit fly)).